The following is an 862-amino-acid chain: DNA replication licensing factor MCM4 (862 aa).

Gly residues predominate over residues 1–12; it reads MASRGGGGGGDG. The tract at residues 1 to 132 is disordered; the sequence is MASRGGGGGG…GGGGGGAGAD (132 aa). Low complexity-rich tracts occupy residues 20–41 and 52–64; these read SSPDVRPSSPLPATNSSPPQSG and SASPYPSSPSLGG. The segment at 289–317 adopts a C4-type zinc-finger fold; it reads CLVCGFYSEPVMVDRGRVTEPHICQKEQC. Residues 453-659 form the MCM domain; it reads IYDRLTRSLA…QTDRRLAKHI (207 aa). Position 503 to 510 (503 to 510) interacts with ATP; sequence GDPGTSKS. The short motif at 635 to 638 is the Arginine finger element; the sequence is SRFD.

This sequence belongs to the MCM family. Component of the minichromosome maintenance (MCM) complex, a heterotetramer composed of MCM2, MCM3, MCM4, MCM5, MCM6 and MCM7.

Its subcellular location is the nucleus. It catalyses the reaction ATP + H2O = ADP + phosphate + H(+). Probable component of the MCM2-7 complex (MCM complex) that may function as a DNA helicase and which is essential to undergo a single round of replication initiation and elongation per cell cycle in eukaryotic cells. This chain is DNA replication licensing factor MCM4 (MCM4), found in Oryza sativa subsp. japonica (Rice).